Here is an 89-residue protein sequence, read N- to C-terminus: Small ribosomal subunit protein uS15 (89 aa).

It belongs to the universal ribosomal protein uS15 family. In terms of assembly, part of the 30S ribosomal subunit. Forms a bridge to the 50S subunit in the 70S ribosome, contacting the 23S rRNA.

Functionally, one of the primary rRNA binding proteins, it binds directly to 16S rRNA where it helps nucleate assembly of the platform of the 30S subunit by binding and bridging several RNA helices of the 16S rRNA. In terms of biological role, forms an intersubunit bridge (bridge B4) with the 23S rRNA of the 50S subunit in the ribosome. This Saccharopolyspora erythraea (strain ATCC 11635 / DSM 40517 / JCM 4748 / NBRC 13426 / NCIMB 8594 / NRRL 2338) protein is Small ribosomal subunit protein uS15.